Reading from the N-terminus, the 464-residue chain is 3-isopropylmalate dehydratase large subunit (464 aa).

The [4Fe-4S] cluster site is built by Cys-337, Cys-397, and Cys-400.

Belongs to the aconitase/IPM isomerase family. LeuC type 1 subfamily. As to quaternary structure, heterodimer of LeuC and LeuD. [4Fe-4S] cluster is required as a cofactor.

The enzyme catalyses (2R,3S)-3-isopropylmalate = (2S)-2-isopropylmalate. It participates in amino-acid biosynthesis; L-leucine biosynthesis; L-leucine from 3-methyl-2-oxobutanoate: step 2/4. Its function is as follows. Catalyzes the isomerization between 2-isopropylmalate and 3-isopropylmalate, via the formation of 2-isopropylmaleate. The sequence is that of 3-isopropylmalate dehydratase large subunit from Bacillus cereus (strain ATCC 14579 / DSM 31 / CCUG 7414 / JCM 2152 / NBRC 15305 / NCIMB 9373 / NCTC 2599 / NRRL B-3711).